Reading from the N-terminus, the 377-residue chain is Phospho-N-acetylmuramoyl-pentapeptide-transferase (377 aa).

11 helical membrane-spanning segments follow: residues 9 to 29, 62 to 82, 85 to 105, 122 to 142, 155 to 175, 178 to 198, 210 to 230, 247 to 267, 274 to 294, 299 to 319, and 354 to 374; these read YITL…LVAG, MGGA…ADWI, FVWV…MDDY, FFWQ…AVSA, WVGS…VPFF, VSYP…IVGT, GLAI…AYVV, AAEL…FLWF, VFMG…IAVI, IVLF…MVQV, and QVVV…LSTL.

The protein belongs to the glycosyltransferase 4 family. MraY subfamily. Mg(2+) serves as cofactor.

Its subcellular location is the cell inner membrane. The enzyme catalyses UDP-N-acetyl-alpha-D-muramoyl-L-alanyl-gamma-D-glutamyl-meso-2,6-diaminopimeloyl-D-alanyl-D-alanine + di-trans,octa-cis-undecaprenyl phosphate = di-trans,octa-cis-undecaprenyl diphospho-N-acetyl-alpha-D-muramoyl-L-alanyl-D-glutamyl-meso-2,6-diaminopimeloyl-D-alanyl-D-alanine + UMP. It functions in the pathway cell wall biogenesis; peptidoglycan biosynthesis. Catalyzes the initial step of the lipid cycle reactions in the biosynthesis of the cell wall peptidoglycan: transfers peptidoglycan precursor phospho-MurNAc-pentapeptide from UDP-MurNAc-pentapeptide onto the lipid carrier undecaprenyl phosphate, yielding undecaprenyl-pyrophosphoryl-MurNAc-pentapeptide, known as lipid I. The polypeptide is Phospho-N-acetylmuramoyl-pentapeptide-transferase (Bordetella parapertussis (strain 12822 / ATCC BAA-587 / NCTC 13253)).